Consider the following 207-residue polypeptide: Large ribosomal subunit protein eL13 (207 aa).

Belongs to the eukaryotic ribosomal protein eL13 family. Component of the 60S large ribosomal subunit (LSU).

It localises to the cytoplasm. Its function is as follows. Component of the ribosome, a large ribonucleoprotein complex responsible for the synthesis of proteins in the cell. The small ribosomal subunit (SSU) binds messenger RNAs (mRNAs) and translates the encoded message by selecting cognate aminoacyl-transfer RNA (tRNA) molecules. The large subunit (LSU) contains the ribosomal catalytic site termed the peptidyl transferase center (PTC), which catalyzes the formation of peptide bonds, thereby polymerizing the amino acids delivered by tRNAs into a polypeptide chain. The nascent polypeptides leave the ribosome through a tunnel in the LSU and interact with protein factors that function in enzymatic processing, targeting, and the membrane insertion of nascent chains at the exit of the ribosomal tunnel. As part of the LSU, it is probably required for its formation and the maturation of rRNAs. The polypeptide is Large ribosomal subunit protein eL13 (rpl-13) (Caenorhabditis elegans).